The primary structure comprises 660 residues: Protein SCARECROW 2 (660 aa).

Disordered stretches follow at residues 1–33 and 190–286; these read MGSS…ITSL and SDPA…KQRD. The span at 192 to 229 shows a compositional bias: pro residues; the sequence is PAPPPPPPSHPALLPPDATAPPPPPTSVAALPPPPPAQ. Low complexity predominate over residues 259-272; the sequence is AAAAAAAAAAAAAA. A coiled-coil region spans residues 262-289; it reads AAAAAAAAAAAAKERKEEQRRKQRDEEG. Positions 273–286 are enriched in basic and acidic residues; that stretch reads AKERKEEQRRKQRD. A GRAS domain is found at 283-653; that stretch reads KQRDEEGLHL…LCLLTASAWR (371 aa). Positions 290 to 354 are leucine repeat I (LRI); that stretch reads LHLLTLLLQC…VSSCLGLYAP (65 aa). The short motif at 297 to 301 is the LxCxE motif element; it reads LQCAE. The tract at residues 373 to 438 is VHIID; sequence FQVFNGISPF…GGPPRVRLTG (66 aa). The VHIID signature appears at 404 to 408; that stretch reads VHIID. The interval 448 to 480 is leucine repeat II (LRII); the sequence is ATGKRLSDFADTLGLPFEFCPVADKAGNLDPEK. The interval 489–576 is PFYRE; sequence VAVHWLRHSL…QQLLSREIRN (88 aa). Positions 579–653 are SAW; that stretch reads AVGGPARTGD…LCLLTASAWR (75 aa).

Belongs to the GRAS family.

It is found in the cytoplasm. Its function is as follows. Probable transcription factor involved in asmmetric cell division in the cortex/endodermis progenitor cell and in the process of stomata and ligule formation in leaves. The sequence is that of Protein SCARECROW 2 (SCR2) from Oryza sativa subsp. indica (Rice).